A 420-amino-acid polypeptide reads, in one-letter code: MDSIPLSTLFIILIICLVLSAYFSGSETGLLSLNKYRLRFLSEQGNKGAKKAEKLLEKPDTLLSFILIFNNLVNISASAIATVIGMRLYGDAGVAIATGLLTFVMLVFSEIFPKTVAAMHAEKVSFFSSHILTSLLKIFYPLVWLMNIFTKSLMQIVGLKLDMQKQVISSEELRSIVSEAGEATPNEQHPQMLLSILDMETVTVDDIMVPRNEIGGINIDDDWRAIMRQLNHAAHNRVVLYKGSLDEQVLGILRVREAFRLLLEKNEFTKETLIRAADEVYFIPESTPLKTQLANFRTNKERIGLVVDEYGDIKGLVTLEDILEEIVGDFTTSTAPSIDKEVIQQSDGSMIIDGSANLRDLNKMFNWELDTEDARTFNGLILEHLEEIPDEGTICEIDGLLITILEVGDNMIKQAKVVKL.

In terms of domain architecture, CNNM transmembrane spans 2-190; that stretch reads DSIPLSTLFI…GEATPNEQHP (189 aa). A run of 4 helical transmembrane segments spans residues 3-23, 65-85, 92-112, and 126-146; these read SIPL…SAYF, FILI…TVIG, AGVA…SEIF, and FFSS…VWLM. 2 consecutive CBS domains span residues 208–268 and 273–333; these read MVPR…KNEF and LIRA…FTTS.

This sequence belongs to the UPF0053 family.

The protein localises to the cell membrane. The polypeptide is UPF0053 protein HI_0107 (Haemophilus influenzae (strain ATCC 51907 / DSM 11121 / KW20 / Rd)).